A 173-amino-acid chain; its full sequence is Translation initiation factor IF-3 (173 aa).

The protein belongs to the IF-3 family. Monomer.

The protein localises to the cytoplasm. Its function is as follows. IF-3 binds to the 30S ribosomal subunit and shifts the equilibrium between 70S ribosomes and their 50S and 30S subunits in favor of the free subunits, thus enhancing the availability of 30S subunits on which protein synthesis initiation begins. In Ehrlichia ruminantium (strain Gardel), this protein is Translation initiation factor IF-3.